Consider the following 99-residue polypeptide: Acylphosphatase (99 aa).

The 93-residue stretch at 5 to 97 (VRQIVIRGRV…RPGERFSQLP (93 aa)) folds into the Acylphosphatase-like domain. Active-site residues include arginine 20 and asparagine 38.

The protein belongs to the acylphosphatase family.

The enzyme catalyses an acyl phosphate + H2O = a carboxylate + phosphate + H(+). This Nitrobacter hamburgensis (strain DSM 10229 / NCIMB 13809 / X14) protein is Acylphosphatase (acyP).